The chain runs to 231 residues: Ribosyldihydronicotinamide dehydrogenase [quinone] (231 aa).

FAD contacts are provided by residues His-12 and 18–21 (FNGS). Ser-80 carries the post-translational modification Phosphoserine. FAD is bound at residue 104–107 (LYWF). A substrate-binding site is contributed by 127 to 129 (FDI). FAD contacts are provided by residues 148–151 (TTGG) and Tyr-156. Residues His-174 and His-178 each coordinate Zn(2+). An FAD-binding site is contributed by Glu-194. At Ser-197 the chain carries Phosphoserine. Arg-201 lines the FAD pocket. Cys-223 serves as a coordination point for Zn(2+).

This sequence belongs to the NAD(P)H dehydrogenase (quinone) family. Homodimer. Zn(2+) serves as cofactor. Requires FAD as cofactor.

The protein resides in the cytoplasm. The enzyme catalyses 1-(beta-D-ribofuranosyl)-1,4-dihydronicotinamide + a quinone + H(+) = beta-nicotinamide D-riboside + a quinol. With respect to regulation, inhibited by melatonin, resveratrol and 5-hydroxytryptamine. In terms of biological role, the enzyme apparently serves as a quinone reductase in connection with conjugation reactions of hydroquinones involved in detoxification pathways as well as in biosynthetic processes such as the vitamin K-dependent gamma-carboxylation of glutamate residues in prothrombin synthesis. In Homo sapiens (Human), this protein is Ribosyldihydronicotinamide dehydrogenase [quinone] (NQO2).